The chain runs to 377 residues: UPF0754 membrane protein RBAM_010020 (377 aa).

Transmembrane regions (helical) follow at residues 1-21 (MGIA…GAVT) and 357-377 (YLGG…VILF).

It belongs to the UPF0754 family.

The protein resides in the cell membrane. The sequence is that of UPF0754 membrane protein RBAM_010020 from Bacillus velezensis (strain DSM 23117 / BGSC 10A6 / LMG 26770 / FZB42) (Bacillus amyloliquefaciens subsp. plantarum).